A 111-amino-acid chain; its full sequence is Probable 4-amino-4-deoxy-L-arabinose-phosphoundecaprenol flippase subunit ArnE (111 aa).

3 helical membrane passes run 36–56 (IVLWLGLALACIGLAMMLWLL), 61–81 (VPVGIAYPMLSLNFVWVTLAA), and 88–108 (PVSPRHWCGVAFIIGGIVILG). The EamA domain maps to 40-109 (LGLALACIGL…IIGGIVILGS (70 aa)).

The protein belongs to the ArnE family. Heterodimer of ArnE and ArnF.

The protein localises to the cell inner membrane. The protein operates within bacterial outer membrane biogenesis; lipopolysaccharide biosynthesis. Translocates 4-amino-4-deoxy-L-arabinose-phosphoundecaprenol (alpha-L-Ara4N-phosphoundecaprenol) from the cytoplasmic to the periplasmic side of the inner membrane. This is Probable 4-amino-4-deoxy-L-arabinose-phosphoundecaprenol flippase subunit ArnE from Shigella flexneri serotype 5b (strain 8401).